The primary structure comprises 295 residues: Transcriptional regulator SirC (295 aa).

Residues E195–T292 enclose the HTH araC/xylS-type domain. 2 consecutive DNA-binding regions (H-T-H motif) follow at residues A212–E233 and I259–F282.

Positive regulator of the expression of the invasion-associated type III secretion system encoded within SPI-1 (pathogenicity island 1). This Salmonella typhi protein is Transcriptional regulator SirC (sirC).